Here is a 201-residue protein sequence, read N- to C-terminus: Recombination protein RecR (201 aa).

The C4-type zinc finger occupies 59–74 (CEICGNMDTENICRIC). The Toprim domain maps to 82 to 177 (SIIAIVETVA…KISRLASGIP (96 aa)).

It belongs to the RecR family.

Its function is as follows. May play a role in DNA repair. It seems to be involved in an RecBC-independent recombinational process of DNA repair. It may act with RecF and RecO. This Rickettsia rickettsii (strain Iowa) protein is Recombination protein RecR.